Here is a 213-residue protein sequence, read N- to C-terminus: Histone H1.2 (213 aa).

Over residues 1-17 (MSETAPAAPAAAPPAEK) the composition is skewed to low complexity. The tract at residues 1–41 (MSETAPAAPAAAPPAEKTPVKKKAAKKPAGARRKASGPPVS) is disordered. An N-acetylserine; partial modification is found at Ser2. Position 2 is a phosphoserine (Ser2). Residue Lys17 is modified to N6-acetyllysine. Over residues 20-35 (VKKKAAKKPAGARRKA) the composition is skewed to basic residues. Residues Lys23, Lys26, and Lys27 each carry the N6-(2-hydroxyisobutyryl)lysine modification. An N6-(beta-hydroxybutyryl)lysine; alternate modification is found at Lys34. Lys34 bears the N6-crotonyllysine; alternate mark. Lys34 carries the N6-methyllysine; alternate modification. One can recognise an H15 domain in the interval 36–109 (SGPPVSELIT…GASGSFKLNK (74 aa)). Lys46 is modified (N6-(2-hydroxyisobutyryl)lysine). Lys52 is subject to N6-(beta-hydroxybutyryl)lysine; alternate. Lys52 carries the N6-(2-hydroxyisobutyryl)lysine; alternate modification. Arg54 carries the citrulline modification. The residue at position 63 (Lys63) is an N6-(2-hydroxyisobutyryl)lysine. An N6-(beta-hydroxybutyryl)lysine; alternate modification is found at Lys64. N6-crotonyllysine; alternate is present on Lys64. N6-(2-hydroxyisobutyryl)lysine; alternate is present on Lys64. Lys75 and Lys81 each carry N6-(2-hydroxyisobutyryl)lysine. N6-(beta-hydroxybutyryl)lysine; alternate occurs at positions 85 and 90. N6-crotonyllysine; alternate occurs at positions 85, 90, and 97. 3 positions are modified to N6-(2-hydroxyisobutyryl)lysine; alternate: Lys85, Lys90, and Lys97. Positions 95 to 213 (QTKGTGASGS…KPKKAAPKKK (119 aa)) are disordered. An N6-succinyllysine; alternate modification is found at Lys97. A Phosphoserine; by PKC modification is found at Ser104. An N6-(beta-hydroxybutyryl)lysine modification is found at Lys106. Lys110, Lys117, Lys121, Lys129, and Lys136 each carry N6-(2-hydroxyisobutyryl)lysine. Residues 119 to 140 (KAKKAGAAKPKKAAGAAKKTKK) are compositionally biased toward basic residues. Thr146 carries the post-translational modification Phosphothreonine. The residue at position 148 (Lys148) is an N6-(2-hydroxyisobutyryl)lysine. Positions 149–160 (KTAKKTPKKAKK) are enriched in basic residues. 2 positions are modified to N6-crotonyllysine; alternate: Lys159 and Lys168. N6-(2-hydroxyisobutyryl)lysine; alternate occurs at positions 159 and 168. The segment covering 169–186 (KVAKSPKKAKAAKPKKAA) has biased composition (basic residues). Lys187 is modified (N6-methyllysine; by EHMT1 and EHMT2). Ser188 carries the post-translational modification ADP-ribosylserine. The segment covering 193 to 213 (VKPKAAKPKVAKPKKAAPKKK) has biased composition (basic residues).

It belongs to the histone H1/H5 family. H1 histones are progressively phosphorylated during the cell cycle, becoming maximally phosphorylated during late G2 phase and M phase, and being dephosphorylated sharply thereafter. Post-translationally, crotonylation (Kcr) is specifically present in male germ cells and marks testis-specific genes in post-meiotic cells, including X-linked genes that escape sex chromosome inactivation in haploid cells. Crotonylation marks active promoters and enhancers and confers resistance to transcriptional repressors. It is also associated with post-meiotically activated genes on autosomes. In terms of processing, ADP-ribosylated on Ser-188 in response to DNA damage. Citrullination at Arg-54 (H1R54ci) by PADI4 takes place within the DNA-binding site of H1 and results in its displacement from chromatin and global chromatin decondensation, thereby promoting pluripotency and stem cell maintenance.

Its subcellular location is the nucleus. It is found in the chromosome. Histone H1 protein binds to linker DNA between nucleosomes forming the macromolecular structure known as the chromatin fiber. Histones H1 are necessary for the condensation of nucleosome chains into higher-order structured fibers. Also acts as a regulator of individual gene transcription through chromatin remodeling, nucleosome spacing and DNA methylation. In Bos taurus (Bovine), this protein is Histone H1.2.